A 347-amino-acid chain; its full sequence is Isopentenyl-diphosphate delta-isomerase (347 aa).

Residue arginine 9 to lysine 10 participates in substrate binding. Residues alanine 65–threonine 67, serine 95, and asparagine 124 contribute to the FMN site. Position 95-97 (serine 95–histidine 97) interacts with substrate. A substrate-binding site is contributed by glutamine 154. Glutamate 155 provides a ligand contact to Mg(2+). FMN is bound by residues lysine 186, serine 211, threonine 216, glycine 262–arginine 264, and serine 283–arginine 284.

Belongs to the IPP isomerase type 2 family. In terms of assembly, homooctamer. Dimer of tetramers. FMN is required as a cofactor. Requires NADPH as cofactor. It depends on Mg(2+) as a cofactor.

The protein localises to the cytoplasm. The enzyme catalyses isopentenyl diphosphate = dimethylallyl diphosphate. Its function is as follows. Involved in the biosynthesis of isoprenoids. Catalyzes the 1,3-allylic rearrangement of the homoallylic substrate isopentenyl (IPP) to its allylic isomer, dimethylallyl diphosphate (DMAPP). The polypeptide is Isopentenyl-diphosphate delta-isomerase (Staphylococcus saprophyticus subsp. saprophyticus (strain ATCC 15305 / DSM 20229 / NCIMB 8711 / NCTC 7292 / S-41)).